The primary structure comprises 455 residues: Probable ATP-dependent RNA helicase DDX47 (455 aa).

Residues 1-10 (MAAPEEHDSP) show a composition bias toward basic and acidic residues. The tract at residues 1 to 20 (MAAPEEHDSPTEASQPIVEE) is disordered. Ala-2 carries the N-acetylalanine modification. Ser-9 carries the post-translational modification Phosphoserine. The Q motif signature appears at 24–52 (KTFKDLGVTDVLCEACDQLGWTKPTKIQI). The region spanning 55–226 (IPLALQGRDI…RAALKNPVKC (172 aa)) is the Helicase ATP-binding domain. An ATP-binding site is contributed by 68-75 (AETGSGKT). Position 149 is a phosphothreonine (Thr-149). Residues 174–177 (DEAD) carry the DEAD box motif. The Helicase C-terminal domain maps to 237 to 397 (KLQQYYIFIP…GFPTQDDEVM (161 aa)). Over residues 413–428 (ELREHGEKKKRSREDA) the composition is skewed to basic and acidic residues. A disordered region spans residues 413–455 (ELREHGEKKKRSREDAGDNDDTEGAIGVRNKVAGGKMKKRKGR). The residue at position 424 (Ser-424) is a Phosphoserine.

Belongs to the DEAD box helicase family. DDX47/RRP3 subfamily. Interacts with AGO1 and AGO2. Interacts with GABARAP. Interacts with NOL8; the interaction is RNA-dependent. In terms of tissue distribution, expressed in skin, lung and breast. Also expressed in the brain.

The protein localises to the nucleus. It localises to the nucleolus. It catalyses the reaction ATP + H2O = ADP + phosphate + H(+). In terms of biological role, required for efficient ribosome biogenesis. May have a role in mRNA splicing. Involved in apoptosis. This Homo sapiens (Human) protein is Probable ATP-dependent RNA helicase DDX47 (DDX47).